A 213-amino-acid chain; its full sequence is GTP-binding protein YPTC4 (213 aa).

Position 13 to 21 (13 to 21 (GDTGVGKSC)) interacts with GTP. The short motif at 35 to 43 (HDLTIGVEF) is the Effector region element. GTP-binding positions include 61–65 (DTAGQ), 119–122 (NKCD), and 149–151 (SAR). Residues 194–213 (AGPQTVKPGEGGAAKSSSCC) are disordered. S-geranylgeranyl cysteine attachment occurs at residues Cys-212 and Cys-213.

The protein belongs to the small GTPase superfamily. Rab family.

It localises to the cell membrane. Protein transport. Probably involved in vesicular traffic. The chain is GTP-binding protein YPTC4 (YPTC4) from Chlamydomonas reinhardtii (Chlamydomonas smithii).